The chain runs to 427 residues: Glutamate-1-semialdehyde 2,1-aminomutase (427 aa).

Position 265 is an N6-(pyridoxal phosphate)lysine (lysine 265).

It belongs to the class-III pyridoxal-phosphate-dependent aminotransferase family. HemL subfamily. Homodimer. Pyridoxal 5'-phosphate serves as cofactor.

The protein localises to the cytoplasm. The catalysed reaction is (S)-4-amino-5-oxopentanoate = 5-aminolevulinate. Its pathway is porphyrin-containing compound metabolism; protoporphyrin-IX biosynthesis; 5-aminolevulinate from L-glutamyl-tRNA(Glu): step 2/2. This chain is Glutamate-1-semialdehyde 2,1-aminomutase, found in Bordetella bronchiseptica (strain ATCC BAA-588 / NCTC 13252 / RB50) (Alcaligenes bronchisepticus).